A 344-amino-acid chain; its full sequence is DNA-directed RNA polymerase subunit alpha (344 aa).

The interval Met1–Pro238 is alpha N-terminal domain (alpha-NTD). Residues Ala254 to Asp344 form an alpha C-terminal domain (alpha-CTD) region.

Belongs to the RNA polymerase alpha chain family. Homodimer. The RNAP catalytic core consists of 2 alpha, 1 beta, 1 beta' and 1 omega subunit. When a sigma factor is associated with the core the holoenzyme is formed, which can initiate transcription.

It catalyses the reaction RNA(n) + a ribonucleoside 5'-triphosphate = RNA(n+1) + diphosphate. Its function is as follows. DNA-dependent RNA polymerase catalyzes the transcription of DNA into RNA using the four ribonucleoside triphosphates as substrates. In Helicobacter pylori (strain J99 / ATCC 700824) (Campylobacter pylori J99), this protein is DNA-directed RNA polymerase subunit alpha.